We begin with the raw amino-acid sequence, 381 residues long: Selenoprotein P (381 aa).

Positions 1-19 (MWRSLGLALALCLLPLGGT) are cleaved as a signal peptide. Asn46 is a glycosylation site (N-linked (GlcNAc...) asparagine). Sec59 is a non-standard amino acid (selenocysteine). N-linked (GlcNAc...) asparagine glycans are attached at residues Asn83, Asn119, and Asn128. Positions 202–268 (SPHYHHEHHH…ENRDMPGSED (67 aa)) are disordered. Residues 204–217 (HYHHEHHHNHRHQH) are compositionally biased toward basic residues. Polar residues predominate over residues 218-229 (LGSSELSENQQP). Residues 243-255 (LHHHHKHKGQHRQ) show a composition bias toward basic residues. Residue Ser266 is modified to Phosphoserine. Non-standard amino acids (selenocysteine) are located at Sec318 and Sec330. Residue Asn338 is glycosylated (N-linked (GlcNAc...) asparagine). Non-standard amino acids (selenocysteine) are located at Sec345, Sec352, Sec367, Sec369, Sec376, and Sec378. The segment at 352-381 (UQISQQLIPTEASTSURUKNQAKKUEUPSN) is disordered. Polar residues predominate over residues 353–369 (QISQQLIPTEASTSURU).

It belongs to the selenoprotein P family. Phosphorylation sites are present in the extracellular medium.

Its subcellular location is the secreted. Functionally, might be responsible for some of the extracellular antioxidant defense properties of selenium or might be involved in the transport of selenium. May supply selenium to tissues such as brain and testis. The protein is Selenoprotein P of Pongo abelii (Sumatran orangutan).